Here is a 186-residue protein sequence, read N- to C-terminus: Thymidine kinase (186 aa).

8 to 15 (GPMYSGKT) contributes to the ATP binding site. Residue Glu-86 is the Proton acceptor of the active site. Substrate is bound at residue Phe-118. 2 residues coordinate Zn(2+): Cys-143 and Cys-146. Residue 162–166 (IIEIG) participates in substrate binding. The Zn(2+) site is built by Cys-175 and Cys-178.

The protein belongs to the thymidine kinase family.

It carries out the reaction thymidine + ATP = dTMP + ADP + H(+). The polypeptide is Thymidine kinase (TK) (Choristoneura fumiferana (Spruce budworm moth)).